The primary structure comprises 94 residues: Aspartyl/glutamyl-tRNA(Asn/Gln) amidotransferase subunit C (94 aa).

Belongs to the GatC family. As to quaternary structure, heterotrimer of A, B and C subunits.

The catalysed reaction is L-glutamyl-tRNA(Gln) + L-glutamine + ATP + H2O = L-glutaminyl-tRNA(Gln) + L-glutamate + ADP + phosphate + H(+). It carries out the reaction L-aspartyl-tRNA(Asn) + L-glutamine + ATP + H2O = L-asparaginyl-tRNA(Asn) + L-glutamate + ADP + phosphate + 2 H(+). Allows the formation of correctly charged Asn-tRNA(Asn) or Gln-tRNA(Gln) through the transamidation of misacylated Asp-tRNA(Asn) or Glu-tRNA(Gln) in organisms which lack either or both of asparaginyl-tRNA or glutaminyl-tRNA synthetases. The reaction takes place in the presence of glutamine and ATP through an activated phospho-Asp-tRNA(Asn) or phospho-Glu-tRNA(Gln). The sequence is that of Aspartyl/glutamyl-tRNA(Asn/Gln) amidotransferase subunit C from Carboxydothermus hydrogenoformans (strain ATCC BAA-161 / DSM 6008 / Z-2901).